The sequence spans 180 residues: Negative modulator of initiation of replication (180 aa).

The interaction with DNA stretch occupies residues 115–119 (RTRVY).

The protein belongs to the SeqA family. In terms of assembly, homodimer. Polymerizes to form helical filaments.

Its subcellular location is the cytoplasm. Functionally, negative regulator of replication initiation, which contributes to regulation of DNA replication and ensures that replication initiation occurs exactly once per chromosome per cell cycle. Binds to pairs of hemimethylated GATC sequences in the oriC region, thus preventing assembly of replication proteins and re-initiation at newly replicated origins. Repression is relieved when the region becomes fully methylated. This Aliivibrio fischeri (strain ATCC 700601 / ES114) (Vibrio fischeri) protein is Negative modulator of initiation of replication.